A 225-amino-acid polypeptide reads, in one-letter code: NAD(P)H-quinone oxidoreductase subunit K, chloroplastic (225 aa).

[4Fe-4S] cluster is bound by residues Cys-43, Cys-44, Cys-108, and Cys-139.

The protein belongs to the complex I 20 kDa subunit family. As to quaternary structure, NDH is composed of at least 16 different subunits, 5 of which are encoded in the nucleus. It depends on [4Fe-4S] cluster as a cofactor.

The protein localises to the plastid. The protein resides in the chloroplast thylakoid membrane. It catalyses the reaction a plastoquinone + NADH + (n+1) H(+)(in) = a plastoquinol + NAD(+) + n H(+)(out). The enzyme catalyses a plastoquinone + NADPH + (n+1) H(+)(in) = a plastoquinol + NADP(+) + n H(+)(out). NDH shuttles electrons from NAD(P)H:plastoquinone, via FMN and iron-sulfur (Fe-S) centers, to quinones in the photosynthetic chain and possibly in a chloroplast respiratory chain. The immediate electron acceptor for the enzyme in this species is believed to be plastoquinone. Couples the redox reaction to proton translocation, and thus conserves the redox energy in a proton gradient. The sequence is that of NAD(P)H-quinone oxidoreductase subunit K, chloroplastic from Lolium perenne (Perennial ryegrass).